A 317-amino-acid chain; its full sequence is UV DNA damage endonuclease (317 aa).

The protein belongs to the uve1/UvsE family.

Component in a DNA repair pathway. Removal of UV LIGHT damaged nucleotides. Recognizes pyrimidine dimers and cleave a phosphodiester bond immediately 5' to the lesion. This is UV DNA damage endonuclease from Bacillus cereus (strain Q1).